Here is a 465-residue protein sequence, read N- to C-terminus: Anthocyanidin 3-O-glucosyltransferase 2 (465 aa).

Catalysis depends on His-22, which acts as the Proton acceptor. An anthocyanidin-binding residues include His-22 and Gln-87. Asp-122 acts as the Charge relay in catalysis. Thr-145 is a UDP-alpha-D-glucose binding site. His-154 is an an anthocyanidin binding site. UDP-alpha-D-glucose contacts are provided by Ala-345, Gln-347, His-362, Trp-365, Asn-366, Ser-367, and Glu-370. Position 385 (Gly-385) interacts with an anthocyanidin. 2 residues coordinate UDP-alpha-D-glucose: Asp-386 and Gln-387.

The protein belongs to the UDP-glycosyltransferase family. Highest expression detected in fruit, with very low levels detected in petal and leaf.

The catalysed reaction is an anthocyanidin + UDP-alpha-D-glucose + H(+) = an anthocyanidin 3-O-beta-D-glucoside + UDP. It carries out the reaction pelargonidin + UDP-alpha-D-glucose = pelargonidin 3-O-beta-D-glucoside + UDP. The enzyme catalyses cyanidin + UDP-alpha-D-glucose = cyanidin 3-O-beta-D-glucoside + UDP + H(+). It functions in the pathway pigment biosynthesis; anthocyanin biosynthesis. In the presence of other necessary color factors, this glycosylation reaction allows the accumulation of anthocyanin pigments. Anthocyanidins are the preferred substrates, while flavonols are only a minor substrate in vitro. The chain is Anthocyanidin 3-O-glucosyltransferase 2 from Fragaria ananassa (Strawberry).